Reading from the N-terminus, the 468-residue chain is 6-phosphogluconate dehydrogenase, decarboxylating (468 aa).

Residues 10–15 (GMAVMG), 33–35 (NRS), 74–76 (VKA), and Asn-102 contribute to the NADP(+) site. Residues Asn-102 and 128–130 (SGG) contribute to the substrate site. The Proton acceptor role is filled by Lys-183. 186-187 (HN) contacts substrate. The active-site Proton donor is Glu-190. Tyr-191, Lys-260, Arg-287, Arg-445, and His-451 together coordinate substrate.

Belongs to the 6-phosphogluconate dehydrogenase family. As to quaternary structure, homodimer.

It catalyses the reaction 6-phospho-D-gluconate + NADP(+) = D-ribulose 5-phosphate + CO2 + NADPH. The protein operates within carbohydrate degradation; pentose phosphate pathway; D-ribulose 5-phosphate from D-glucose 6-phosphate (oxidative stage): step 3/3. Catalyzes the oxidative decarboxylation of 6-phosphogluconate to ribulose 5-phosphate and CO(2), with concomitant reduction of NADP to NADPH. In Escherichia coli (strain K12), this protein is 6-phosphogluconate dehydrogenase, decarboxylating (gnd).